We begin with the raw amino-acid sequence, 296 residues long: NAD kinase (296 aa).

Catalysis depends on aspartate 73, which acts as the Proton acceptor. Residues 73 to 74 (DG), lysine 78, 151 to 152 (NE), arginine 178, aspartate 180, and 191 to 196 (TAHAMS) contribute to the NAD(+) site.

It belongs to the NAD kinase family. A divalent metal cation is required as a cofactor.

The protein resides in the cytoplasm. It carries out the reaction NAD(+) + ATP = ADP + NADP(+) + H(+). Involved in the regulation of the intracellular balance of NAD and NADP, and is a key enzyme in the biosynthesis of NADP. Catalyzes specifically the phosphorylation on 2'-hydroxyl of the adenosine moiety of NAD to yield NADP. This is NAD kinase from Francisella tularensis subsp. novicida (strain U112).